A 239-amino-acid polypeptide reads, in one-letter code: DnaA regulatory inactivator Hda (239 aa).

It belongs to the DnaA family. HdA subfamily. The active form seems to be an ADP-bound monomer. Forms the RIDA complex (regulatory inactivation of DnaA) of ATP-DnaA, ADP-Hda and the DNA-loaded beta sliding clamp (dnaN).

Functionally, mediates the interaction of DNA replication initiator protein DnaA with DNA polymerase subunit beta sliding clamp (dnaN). Stimulates hydrolysis of ATP-DnaA to ADP-DnaA, rendering DnaA inactive for reinitiation, a process called regulatory inhibition of DnaA or RIDA. This chain is DnaA regulatory inactivator Hda, found in Yersinia enterocolitica serotype O:8 / biotype 1B (strain NCTC 13174 / 8081).